The chain runs to 385 residues: O-phospho-L-seryl-tRNA:Cys-tRNA synthase (385 aa).

Pyridoxal 5'-phosphate contacts are provided by residues 89 to 90 (AR), Asn195, and 218 to 220 (SGH). Position 221 is an N6-(pyridoxal phosphate)lysine (Lys221).

Belongs to the SepCysS family. In terms of assembly, homodimer. Interacts with SepRS. The cofactor is pyridoxal 5'-phosphate.

It catalyses the reaction O-phospho-L-seryl-tRNA(Cys) + hydrogen sulfide + H(+) = L-cysteinyl-tRNA(Cys) + phosphate. Functionally, converts O-phospho-L-seryl-tRNA(Cys) (Sep-tRNA(Cys)) to L-cysteinyl-tRNA(Cys) (Cys-tRNA(Cys)). The polypeptide is O-phospho-L-seryl-tRNA:Cys-tRNA synthase (Methanococcus aeolicus (strain ATCC BAA-1280 / DSM 17508 / OCM 812 / Nankai-3)).